Reading from the N-terminus, the 264-residue chain is S-adenosylmethionine decarboxylase proenzyme (264 aa).

The active-site Schiff-base intermediate with substrate; via pyruvic acid is Ser112. Ser112 carries the post-translational modification Pyruvic acid (Ser); by autocatalysis. The active-site Proton acceptor; for processing activity is the His117. The active-site Proton donor; for catalytic activity is the Cys140.

The protein belongs to the prokaryotic AdoMetDC family. Type 2 subfamily. As to quaternary structure, heterooctamer of four alpha and four beta chains arranged as a tetramer of alpha/beta heterodimers. The cofactor is pyruvate. In terms of processing, is synthesized initially as an inactive proenzyme. Formation of the active enzyme involves a self-maturation process in which the active site pyruvoyl group is generated from an internal serine residue via an autocatalytic post-translational modification. Two non-identical subunits are generated from the proenzyme in this reaction, and the pyruvate is formed at the N-terminus of the alpha chain, which is derived from the carboxyl end of the proenzyme. The post-translation cleavage follows an unusual pathway, termed non-hydrolytic serinolysis, in which the side chain hydroxyl group of the serine supplies its oxygen atom to form the C-terminus of the beta chain, while the remainder of the serine residue undergoes an oxidative deamination to produce ammonia and the pyruvoyl group blocking the N-terminus of the alpha chain.

The enzyme catalyses S-adenosyl-L-methionine + H(+) = S-adenosyl 3-(methylsulfanyl)propylamine + CO2. Its pathway is amine and polyamine biosynthesis; S-adenosylmethioninamine biosynthesis; S-adenosylmethioninamine from S-adenosyl-L-methionine: step 1/1. Functionally, catalyzes the decarboxylation of S-adenosylmethionine to S-adenosylmethioninamine (dcAdoMet), the propylamine donor required for the synthesis of the polyamines spermine and spermidine from the diamine putrescine. The protein is S-adenosylmethionine decarboxylase proenzyme of Klebsiella pneumoniae subsp. pneumoniae (strain ATCC 700721 / MGH 78578).